A 377-amino-acid polypeptide reads, in one-letter code: Queuine tRNA-ribosyltransferase (377 aa).

Residue D92 is the Proton acceptor of the active site. Residues 92–96, D146, Q190, and G217 each bind substrate; that span reads DSGGF. The RNA binding stretch occupies residues 248-254; it reads GVGRPED. The active-site Nucleophile is the D267. Residues 272 to 276 are RNA binding; important for wobble base 34 recognition; the sequence is TRHAR. The Zn(2+) site is built by C305, C307, C310, and H337.

This sequence belongs to the queuine tRNA-ribosyltransferase family. Homodimer. Within each dimer, one monomer is responsible for RNA recognition and catalysis, while the other monomer binds to the replacement base PreQ1. The cofactor is Zn(2+).

The enzyme catalyses 7-aminomethyl-7-carbaguanine + guanosine(34) in tRNA = 7-aminomethyl-7-carbaguanosine(34) in tRNA + guanine. It participates in tRNA modification; tRNA-queuosine biosynthesis. Catalyzes the base-exchange of a guanine (G) residue with the queuine precursor 7-aminomethyl-7-deazaguanine (PreQ1) at position 34 (anticodon wobble position) in tRNAs with GU(N) anticodons (tRNA-Asp, -Asn, -His and -Tyr). Catalysis occurs through a double-displacement mechanism. The nucleophile active site attacks the C1' of nucleotide 34 to detach the guanine base from the RNA, forming a covalent enzyme-RNA intermediate. The proton acceptor active site deprotonates the incoming PreQ1, allowing a nucleophilic attack on the C1' of the ribose to form the product. After dissociation, two additional enzymatic reactions on the tRNA convert PreQ1 to queuine (Q), resulting in the hypermodified nucleoside queuosine (7-(((4,5-cis-dihydroxy-2-cyclopenten-1-yl)amino)methyl)-7-deazaguanosine). This Xylella fastidiosa (strain Temecula1 / ATCC 700964) protein is Queuine tRNA-ribosyltransferase.